The chain runs to 379 residues: S-(hydroxymethyl)glutathione dehydrogenase (379 aa).

Zn(2+) is bound at residue Cys47. His48 provides a ligand contact to NAD(+). Zn(2+) contacts are provided by His69, Glu70, Cys99, Cys102, Cys105, Cys113, and Cys176. Residues 201-206 (GAGCIG), Asp225, and 296-298 (IGV) contribute to the NAD(+) site.

This sequence belongs to the zinc-containing alcohol dehydrogenase family. Class-III subfamily. Zn(2+) is required as a cofactor.

It carries out the reaction a primary alcohol + NAD(+) = an aldehyde + NADH + H(+). It catalyses the reaction a secondary alcohol + NAD(+) = a ketone + NADH + H(+). The catalysed reaction is S-(hydroxymethyl)glutathione + NADP(+) = S-formylglutathione + NADPH + H(+). The enzyme catalyses S-(hydroxymethyl)glutathione + NAD(+) = S-formylglutathione + NADH + H(+). It carries out the reaction S-nitrosoglutathione + NADH + H(+) = S-(hydroxysulfenamide)glutathione + NAD(+). Oxidizes long-chain alcohols and, in the presence of glutathione, is able to oxidize formaldehyde. Also acts as a S-nitroso-glutathione reductase by catalyzing the NADH-dependent reduction of S-nitrosoglutathione, thereby regulating protein S-nitrosylation. The sequence is that of S-(hydroxymethyl)glutathione dehydrogenase (FLD1) from Komagataella pastoris (Yeast).